Here is a 529-residue protein sequence, read N- to C-terminus: Zinc metalloproteinase MspA (529 aa).

A signal peptide spans 1 to 24; sequence MHHNYYLSPLAVALALGMVSPAKA. Residues 25-204 constitute a propeptide that is removed on maturation; that stretch reads ADPILLQNAS…PFVQWNDIKT (180 aa). His-365 lines the Zn(2+) pocket. Residue Glu-366 is part of the active site. Zn(2+)-binding residues include His-369 and Glu-389. His-451 serves as the catalytic Proton donor.

It belongs to the peptidase M4 family. Requires Zn(2+) as cofactor.

This is Zinc metalloproteinase MspA (mspA) from Legionella longbeachae.